The sequence spans 432 residues: Glutamate-gated chloride channel subunit beta (432 aa).

The N-terminal stretch at 1 to 18 (MSQYMMVAVAAVVAVAGS) is a signal peptide. Residues 19 to 249 (SQISRRSTGG…MQLTLKRQFS (231 aa)) lie on the Extracellular side of the membrane. Residue N52 is glycosylated (N-linked (GlcNAc...) asparagine). L-glutamate is bound by residues R69, R88, and S155. The cysteines at positions 164 and 178 are disulfide-linked. S184 contacts L-glutamate. Residue N219 is glycosylated (N-linked (GlcNAc...) asparagine). Cysteines 226 and 237 form a disulfide. The helical transmembrane segment at 250–272 (YYLVQLYGPTTMIVIVSWVSFWI) threads the bilayer. Residues 273–277 (DMHST) lie on the Cytoplasmic side of the membrane. The helical transmembrane segment at 278–299 (AGRVALGVTTLLTMTTMQAAIN) threads the bilayer. Over 300–306 (AKLPPVS) the chain is Extracellular. A helical transmembrane segment spans residues 307–327 (YVKVVDVWLGACQTFVFGALL). Topologically, residues 328 to 402 (EYAFVSYQDS…KPDYLPAKID (75 aa)) are cytoplasmic. Residues 403 to 426 (YYARFCVPLGFLAFNAIYWTSCLV) traverse the membrane as a helical segment. Residues 427-432 (MVSRLV) are Extracellular-facing.

The protein belongs to the ligand-gated ion channel (TC 1.A.9) family. Glutamate-gated chloride channel (TC 1.A.9.4) subfamily. In terms of assembly, pentamer. Expressed in motor neuron commissures at the anterior portion of the worms.

Its subcellular location is the postsynaptic cell membrane. It localises to the cell membrane. In terms of biological role, glutamate-gated chloride channel subunit; channel properties may be modulated by the formation of heteromeric channels. Glutamate binding triggers a rapidly reversible current, while the anti-helmintic drug ivermectin triggers a permanently open channel configuration. In Haemonchus contortus (Barber pole worm), this protein is Glutamate-gated chloride channel subunit beta.